The following is a 213-amino-acid chain: Probable transaldolase (213 aa).

Residue lysine 83 is the Schiff-base intermediate with substrate of the active site.

Belongs to the transaldolase family. Type 3B subfamily.

Its subcellular location is the cytoplasm. It carries out the reaction D-sedoheptulose 7-phosphate + D-glyceraldehyde 3-phosphate = D-erythrose 4-phosphate + beta-D-fructose 6-phosphate. It participates in carbohydrate degradation; pentose phosphate pathway; D-glyceraldehyde 3-phosphate and beta-D-fructose 6-phosphate from D-ribose 5-phosphate and D-xylulose 5-phosphate (non-oxidative stage): step 2/3. Transaldolase is important for the balance of metabolites in the pentose-phosphate pathway. The protein is Probable transaldolase of Desulfitobacterium hafniense (strain DSM 10664 / DCB-2).